A 67-amino-acid polypeptide reads, in one-letter code: ATP synthase subunit c (67 aa).

2 helical membrane passes run I6–N26 and I46–V66.

It belongs to the ATPase C chain family. In terms of assembly, F-type ATPases have 2 components, F(1) - the catalytic core - and F(0) - the membrane proton channel. F(1) has five subunits: alpha(3), beta(3), gamma(1), delta(1), epsilon(1). F(0) has three main subunits: a(1), b(2) and c(10-14). The alpha and beta chains form an alternating ring which encloses part of the gamma chain. F(1) is attached to F(0) by a central stalk formed by the gamma and epsilon chains, while a peripheral stalk is formed by the delta and b chains.

The protein resides in the cell membrane. Functionally, f(1)F(0) ATP synthase produces ATP from ADP in the presence of a proton or sodium gradient. F-type ATPases consist of two structural domains, F(1) containing the extramembraneous catalytic core and F(0) containing the membrane proton channel, linked together by a central stalk and a peripheral stalk. During catalysis, ATP synthesis in the catalytic domain of F(1) is coupled via a rotary mechanism of the central stalk subunits to proton translocation. Key component of the F(0) channel; it plays a direct role in translocation across the membrane. A homomeric c-ring of between 10-14 subunits forms the central stalk rotor element with the F(1) delta and epsilon subunits. This chain is ATP synthase subunit c, found in Streptococcus mutans serotype c (strain ATCC 700610 / UA159).